The sequence spans 911 residues: Alpha-actinin-4 (911 aa).

The segment at 1-269 (MVDYHAANQA…YVSSFYHAFS (269 aa)) is actin-binding. Positions 12–26 (QYGPSSGGNGTGGGG) are interaction with VCL. The disordered stretch occupies residues 12-31 (QYGPSSGGNGTGGGGGMGDY). Residues 16 to 29 (SSGGNGTGGGGGMG) show a composition bias toward gly residues. Tyr31 is modified (phosphotyrosine). The interaction with VCL stretch occupies residues 40-61 (RDLLLDPAWEKQQRKTFTAWCN). Calponin-homology (CH) domains follow at residues 50–154 (KQQR…LRFA) and 163–269 (TSAK…HAFS). Residues 84–88 (LMLLL) carry the LXXLL motif motif. The interval 108-126 (KINNVNKALDFIASKGVKL) is interaction with VCL. Lys114 carries the N6-acetyllysine modification. Positions 177–192 (TAPYKNVNVQNFHISW) are polyphosphoinositide (PIP2)-binding. Lys214 is modified (N6-acetyllysine). At Thr249 the chain carries Phosphothreonine. Spectrin repeat units lie at residues 293–403 (HLME…WLLN), 413–518 (HLAE…ALEK), 528–639 (QLHL…ALLE), and 649–752 (HLRR…EVEN). Residues Lys592 and Lys625 each carry the N6-acetyllysine modification. Ser696 is subject to Phosphoserine. The segment at 736 to 911 (WEQLLTTIAR…STALYGESDL (176 aa)) is mediates interaction with MICALL2. EF-hand domains are found at residues 765-800 (EQMQ…LGYD) and 806-841 (QGDA…ETTD). Residue Asp778 coordinates Ca(2+). At Lys779 the chain carries N6-acetyllysine. Ca(2+)-binding residues include Asp780 and Glu789. Lys859 is subject to N6-acetyllysine. A Phosphoserine modification is found at Ser909.

Belongs to the alpha-actinin family. Homodimer; antiparallel. Interacts with MAGI1. Interacts with MICALL2 (preferentially in opened conformation); stimulated by RAB13 activation. Identified in a IGF2BP1-dependent mRNP granule complex containing untranslated mRNAs. Component of the CART complex, at least composed of ACTN4, HGS/HRS, MYO5B and TRIM3. Binds TRIM3 at the N-terminus. Interacts with PDLIM2. Identified in a complex with CASK, IQGAP1, MAGI2, NPHS1, SPTAN1 and SPTBN1. Interacts with PPARG and RARA. Binds to VCL; this interaction triggers VCL conformational changes. Interacts with SEPTIN14. Interacts with IGSF8. As to expression, expressed in the foot process layer of podocytes in the kidney glomerulus but not in tubules (at protein level).

It is found in the nucleus. It localises to the cytoplasm. The protein resides in the cell junction. The protein localises to the cytoskeleton. Its subcellular location is the stress fiber. It is found in the perinuclear region. Its function is as follows. F-actin cross-linking protein which is thought to anchor actin to a variety of intracellular structures. This is a bundling protein. Probably involved in vesicular trafficking via its association with the CART complex. The CART complex is necessary for efficient transferrin receptor recycling but not for EGFR degradation. Involved in tight junction assembly in epithelial cells probably through interaction with MICALL2. Links MICALL2 to the actin cytoskeleton and recruits it to the tight junctions. May also function as a transcriptional coactivator, stimulating transcription mediated by the nuclear hormone receptors PPARG and RARA. Association with IGSF8 regulates the immune synapse formation and is required for efficient T-cell activation. This Rattus norvegicus (Rat) protein is Alpha-actinin-4.